Reading from the N-terminus, the 90-residue chain is Probable Fe(2+)-trafficking protein (90 aa).

The protein belongs to the Fe(2+)-trafficking protein family.

Its function is as follows. Could be a mediator in iron transactions between iron acquisition and iron-requiring processes, such as synthesis and/or repair of Fe-S clusters in biosynthetic enzymes. This is Probable Fe(2+)-trafficking protein from Vibrio parahaemolyticus serotype O3:K6 (strain RIMD 2210633).